The sequence spans 252 residues: Phosphoribosylformylglycinamidine synthase subunit PurQ (252 aa).

In terms of domain architecture, Glutamine amidotransferase type-1 spans 6–237; it reads VGVVVFPGSN…FAHLAGTKRS (232 aa). Cys89 (nucleophile) is an active-site residue. Residues His206 and Glu208 contribute to the active site.

As to quaternary structure, part of the FGAM synthase complex composed of 1 PurL, 1 PurQ and 2 PurS subunits.

It localises to the cytoplasm. It carries out the reaction N(2)-formyl-N(1)-(5-phospho-beta-D-ribosyl)glycinamide + L-glutamine + ATP + H2O = 2-formamido-N(1)-(5-O-phospho-beta-D-ribosyl)acetamidine + L-glutamate + ADP + phosphate + H(+). The catalysed reaction is L-glutamine + H2O = L-glutamate + NH4(+). It functions in the pathway purine metabolism; IMP biosynthesis via de novo pathway; 5-amino-1-(5-phospho-D-ribosyl)imidazole from N(2)-formyl-N(1)-(5-phospho-D-ribosyl)glycinamide: step 1/2. Its function is as follows. Part of the phosphoribosylformylglycinamidine synthase complex involved in the purines biosynthetic pathway. Catalyzes the ATP-dependent conversion of formylglycinamide ribonucleotide (FGAR) and glutamine to yield formylglycinamidine ribonucleotide (FGAM) and glutamate. The FGAM synthase complex is composed of three subunits. PurQ produces an ammonia molecule by converting glutamine to glutamate. PurL transfers the ammonia molecule to FGAR to form FGAM in an ATP-dependent manner. PurS interacts with PurQ and PurL and is thought to assist in the transfer of the ammonia molecule from PurQ to PurL. The sequence is that of Phosphoribosylformylglycinamidine synthase subunit PurQ from Chlorobaculum parvum (strain DSM 263 / NCIMB 8327) (Chlorobium vibrioforme subsp. thiosulfatophilum).